The following is a 742-amino-acid chain: Protein-lysine N-methyltransferase SMYD4 (742 aa).

Residue 110–112 (RSA) coordinates S-adenosyl-L-methionine. In terms of domain architecture, SET spans 230–569 (SSLSLNFSTE…SGQEIFHCYG (340 aa)). Zn(2+)-binding residues include C295, C298, C308, C311, C317, C321, H330, and C334. The MYND-type zinc finger occupies 295–334 (CHHCLKQLLASIPCCGCSYAKYCSQNCADVAWEQYHRTEC). S-adenosyl-L-methionine-binding positions include N418, 534-535 (NH), and Y568.

It belongs to the class V-like SAM-binding methyltransferase superfamily.

It is found in the nucleus. The protein localises to the cytoplasm. The enzyme catalyses L-lysyl-[protein] + S-adenosyl-L-methionine = N(6)-methyl-L-lysyl-[protein] + S-adenosyl-L-homocysteine + H(+). In terms of biological role, protein-lysine N-methyltransferase. Monomethylates PRMT5, modulating its transcriptional activity. May also act as a histone methyltransferase. Plays a critical role in cardiac development. Acts as a key epigenetic regulator of gene expression during cardiac development via its dual activities as a methyltransferase and negative regulator of HDAC1. The sequence is that of Protein-lysine N-methyltransferase SMYD4 (SMYD4) from Gallus gallus (Chicken).